The chain runs to 186 residues: Large ribosomal subunit protein uL22 (186 aa).

Positions 160–186 (AAENEPAKKKLSKKKLQRQKEKMMRNE) are disordered. Residues 177-186 (RQKEKMMRNE) are compositionally biased toward basic and acidic residues.

Belongs to the universal ribosomal protein uL22 family.

The chain is Large ribosomal subunit protein uL22 (RpL17) from Aedes aegypti (Yellowfever mosquito).